The following is a 500-amino-acid chain: 4-aminobutyrate aminotransferase, mitochondrial (500 aa).

A mitochondrion-targeting transit peptide spans 1-28; the sequence is MASMLVAQRLACSFQHSYRLLVPGSRHI. Cys163 serves as a coordination point for [2Fe-2S] cluster. 164 to 165 lines the pyridoxal 5'-phosphate pocket; that stretch reads GS. Cys166 provides a ligand contact to [2Fe-2S] cluster. Arg220 serves as a coordination point for substrate. Residue Lys231 is modified to N6-succinyllysine. Lys252 bears the N6-acetyllysine; alternate mark. Lys252 bears the N6-succinyllysine; alternate mark. An N6-acetyllysine mark is found at Lys279 and Lys318. Lys357 is modified (N6-(pyridoxal phosphate)lysine). Residue Thr381 coordinates pyridoxal 5'-phosphate. Lys413 carries the post-translational modification N6-acetyllysine; alternate. Lys413 carries the N6-succinyllysine; alternate modification. N6-acetyllysine occurs at positions 452 and 470.

Belongs to the class-III pyridoxal-phosphate-dependent aminotransferase family. In terms of assembly, homodimer; disulfide-linked. Pyridoxal 5'-phosphate is required as a cofactor. It depends on [2Fe-2S] cluster as a cofactor.

It localises to the mitochondrion matrix. It catalyses the reaction 4-aminobutanoate + 2-oxoglutarate = succinate semialdehyde + L-glutamate. It carries out the reaction (S)-3-amino-2-methylpropanoate + 2-oxoglutarate = 2-methyl-3-oxopropanoate + L-glutamate. Catalyzes the conversion of gamma-aminobutyrate and L-beta-aminoisobutyrate to succinate semialdehyde and methylmalonate semialdehyde, respectively. Can also convert delta-aminovalerate and beta-alanine. The sequence is that of 4-aminobutyrate aminotransferase, mitochondrial (ABAT) from Bos taurus (Bovine).